Reading from the N-terminus, the 202-residue chain is Imidazoleglycerol-phosphate dehydratase (202 aa).

This sequence belongs to the imidazoleglycerol-phosphate dehydratase family.

It is found in the cytoplasm. It catalyses the reaction D-erythro-1-(imidazol-4-yl)glycerol 3-phosphate = 3-(imidazol-4-yl)-2-oxopropyl phosphate + H2O. Its pathway is amino-acid biosynthesis; L-histidine biosynthesis; L-histidine from 5-phospho-alpha-D-ribose 1-diphosphate: step 6/9. The chain is Imidazoleglycerol-phosphate dehydratase from Parasynechococcus marenigrum (strain WH8102).